We begin with the raw amino-acid sequence, 233 residues long: Small ribosomal subunit protein uS2 (233 aa).

The protein belongs to the universal ribosomal protein uS2 family.

The chain is Small ribosomal subunit protein uS2 from Prochlorococcus marinus (strain MIT 9312).